Consider the following 217-residue polypeptide: Small ribosomal subunit protein uS3 (217 aa).

Residues 38-106 (IRKYIDNALQ…KVHINVIEIK (69 aa)) enclose the KH type-2 domain.

It belongs to the universal ribosomal protein uS3 family. In terms of assembly, part of the 30S ribosomal subunit. Forms a tight complex with proteins S10 and S14.

In terms of biological role, binds the lower part of the 30S subunit head. Binds mRNA in the 70S ribosome, positioning it for translation. This is Small ribosomal subunit protein uS3 from Staphylococcus saprophyticus subsp. saprophyticus (strain ATCC 15305 / DSM 20229 / NCIMB 8711 / NCTC 7292 / S-41).